A 338-amino-acid chain; its full sequence is 1-aminocyclopropane-1-carboxylate deaminase (338 aa).

The residue at position 51 (lysine 51) is an N6-(pyridoxal phosphate)lysine. The Nucleophile role is filled by serine 78.

This sequence belongs to the ACC deaminase/D-cysteine desulfhydrase family. As to quaternary structure, homotrimer. Requires pyridoxal 5'-phosphate as cofactor.

It carries out the reaction 1-aminocyclopropane-1-carboxylate + H2O = 2-oxobutanoate + NH4(+). Catalyzes a cyclopropane ring-opening reaction, the irreversible conversion of 1-aminocyclopropane-1-carboxylate (ACC) to ammonia and alpha-ketobutyrate. Allows growth on ACC as a nitrogen source. The chain is 1-aminocyclopropane-1-carboxylate deaminase from Ralstonia nicotianae (strain ATCC BAA-1114 / GMI1000) (Ralstonia solanacearum).